The primary structure comprises 167 residues: MSHRALYPGTFDPITNGHVDVVQRAARLFDFLIVGIYAGHEGRAKQPLFSAEERRFLAEQALRHLPNVRVDVFSGLAVDYARAVGAQAIVRGLRAVSDFEYEFSLAHMYRHLAPDVDVVCLMTSSQYSFISSSMIKEVAQLGGNLTGLVPDHVAEALVQKFRTLVRE.

T10 is a substrate binding site. Residues T10–F11 and H18 contribute to the ATP site. 2 residues coordinate substrate: A77 and R91. Residues G92–R94, E102, and Y127–S133 contribute to the ATP site.

This sequence belongs to the bacterial CoaD family. Homohexamer. Mg(2+) serves as cofactor.

The protein resides in the cytoplasm. It catalyses the reaction (R)-4'-phosphopantetheine + ATP + H(+) = 3'-dephospho-CoA + diphosphate. It functions in the pathway cofactor biosynthesis; coenzyme A biosynthesis; CoA from (R)-pantothenate: step 4/5. In terms of biological role, reversibly transfers an adenylyl group from ATP to 4'-phosphopantetheine, yielding dephospho-CoA (dPCoA) and pyrophosphate. This Thermomicrobium roseum (strain ATCC 27502 / DSM 5159 / P-2) protein is Phosphopantetheine adenylyltransferase.